The chain runs to 464 residues: MSQILKTSLLIVGGGPGGYVAAIRAGQLGIPTVLVEGAALGGTCLNVGCIPSKALIHAAEEYLKARHYASRSALGIQVQAPSIDIARTVEWKDAIVDRLTSGVAALLKKHGVDVVQGWARILDGKSVAVELAGGGSQRIECEHLLLAAGSQSVELPILPLGGKVISSTEALAPGSLPKRLVVVGGGYIGLELGTAYRKLGVEVAVVEAQPRILPGYDEELTKPVAQALRRLGVELYLGHSLLGPSENGVRVRDGAGEEREIAADQVLVAVGRKPRSEGWNLESLGLDMNGRAVKVDDQCRTSMRNVWAIGDLAGEPMLAHRAMAQGEMVAELIAGKRRQFAPVAIPAVCFTDPEVVVAGLSPEQAKDAGLDCLVASFPFAANGRAMTLEANEGFVRVVARRDNHLVVGWQAVGKAVSELSTAFAQSLEMGARLEDIAGTIHAHPTLGEAVQEAALRALGHALHI.

FAD is bound by residues 36–44 (EGAALGGTC), Lys53, and Ala119. Cys44 and Cys49 are disulfide-bonded. NAD(+)-binding positions include 184-188 (GGGYI), Glu207, and 269-272 (AVGR). FAD is bound by residues Asp311 and Ala319. The active-site Proton acceptor is His443.

This sequence belongs to the class-I pyridine nucleotide-disulfide oxidoreductase family. Homodimer. FAD is required as a cofactor.

It localises to the cytoplasm. The catalysed reaction is N(6)-[(R)-dihydrolipoyl]-L-lysyl-[protein] + NAD(+) = N(6)-[(R)-lipoyl]-L-lysyl-[protein] + NADH + H(+). Functionally, the branched-chain alpha-keto dehydrogenase complex catalyzes the overall conversion of alpha-keto acids to acyl-CoA and CO(2). It contains multiple copies of 3 enzymatic components: branched-chain alpha-keto acid decarboxylase (E1), lipoamide acyltransferase (E2) and lipoamide dehydrogenase (E3). This chain is Dihydrolipoyl dehydrogenase, found in Pseudomonas aeruginosa (strain ATCC 15692 / DSM 22644 / CIP 104116 / JCM 14847 / LMG 12228 / 1C / PRS 101 / PAO1).